The primary structure comprises 238 residues: Sugar fermentation stimulation protein homolog (238 aa).

This sequence belongs to the SfsA family.

The sequence is that of Sugar fermentation stimulation protein homolog from Histophilus somni (strain 129Pt) (Haemophilus somnus).